The following is a 393-amino-acid chain: MPKKKPTPIQLNPAPDGSAVNGTSSAETNLEALQKKLEELELDEQQRKRLEAFLTQKQKVGELKDDDFEKISELGAGNGGVVFKVSHKPSGLVMARKLIHLEIKPAIRNQIIRELQVLHECNSPYIVGFYGAFYSDGEISICMEHMDGGSLDQVLKKAGRIPEQILGKVSIAVIKGLTYLREKHKIMHRDVKPSNILVNSRGEIKLCDFGVSGQLIDSMANSFVGTRSYMSPERLQGTHYSVQSDIWSMGLSLVEMAVGRYPIPPPDAKELELLFGCHVEGDAAETPPRPRTPGRPLSSYGMDSRPPMAIFELLDYIVNEPPPKLPSGVFSLEFQDFVNKCLIKNPAERADLKQLMVHAFIKRSDAEEVDFAGWLCSTIGLNQPSTPTHAASI.

A disordered region spans residues 1 to 27 (MPKKKPTPIQLNPAPDGSAVNGTSSAE). The Protein kinase domain maps to 68–361 (FEKISELGAG…LKQLMVHAFI (294 aa)). Residues 74 to 82 (LGAGNGGVV) and Lys-97 contribute to the ATP site. The Proton acceptor role is filled by Asp-190. Residues Ser-218 and Ser-222 each carry the phosphoserine; by RAF modification. The tract at residues 270–307 (ELELLFGCHVEGDAAETPPRPRTPGRPLSSYGMDSRPP) is RAF1-binding. Position 286 is a phosphothreonine (Thr-286). Thr-292 carries the phosphothreonine; by MAPK1 modification. A Phosphoserine; by PAK modification is found at Ser-298.

The protein belongs to the protein kinase superfamily. STE Ser/Thr protein kinase family. MAP kinase kinase subfamily. As to quaternary structure, found in a complex with at least BRAF, HRAS, MAP2K1, MAPK3/ERK1 and RGS14. Forms a heterodimer with MAP2K2/MEK2. Forms heterodimers with KSR2 which further dimerize to form tetramers. Interacts with KSR1 or KSR2 and BRAF; the interaction with KSR1 or KSR2 mediates KSR1-BRAF or KSR2-BRAF dimerization. Interacts with ARBB2, LAMTOR3, MAPK1/ERK2 and RAF1. Interacts with MAPK1/ERK2. Interacts with MORG1. Interacts with PPARG. Interacts with SGK1. Interacts with BIRC6/bruce. Interacts with KAT7; the interaction promotes KAT7 phosphorylation. Interacts with RAF1 and NEK10; the interaction is required for ERK1/2-signaling pathway activation in response to UV irradiation. Interacts with TRAF3IP3. Interacts with MOS. Phosphorylation at Ser-218 and Ser-222 by MAP kinase kinase kinases (BRAF or MEKK1) positively regulates kinase activity. Also phosphorylated at Thr-292 by MAPK1/ERK2 and at Ser-298 by PAK. MAPK1/ERK2 phosphorylation of Thr-292 occurs in response to cellular adhesion and leads to inhibition of Ser-298 phosphorylation by PAK. Autophosphorylated at Ser-218 and Ser-222, autophosphosphorylation is promoted by NEK10 following UV irradiation.

The protein resides in the cytoplasm. The protein localises to the cytoskeleton. Its subcellular location is the microtubule organizing center. It localises to the centrosome. It is found in the spindle pole body. The protein resides in the nucleus. The protein localises to the membrane. The catalysed reaction is L-seryl-[protein] + ATP = O-phospho-L-seryl-[protein] + ADP + H(+). It catalyses the reaction L-threonyl-[protein] + ATP = O-phospho-L-threonyl-[protein] + ADP + H(+). It carries out the reaction L-tyrosyl-[protein] + ATP = O-phospho-L-tyrosyl-[protein] + ADP + H(+). Its activity is regulated as follows. Ras proteins such as HRAS mediate the activation of RAF proteins such as RAF1 or BRAF which in turn activate extracellular signal-regulated kinases (ERK) through MAPK (mitogen-activated protein kinases) and ERK kinases MAP2K1/MEK1 and MAP2K2/MEK2. Activation occurs through phosphorylation of Ser-218 and Ser-222. MAP2K1/MEK1 binds KSR1 or KSR2 releasing the inhibitory intramolecular interaction between KSR1 or KSR2 protein kinase and N-terminal domains. This allows KSR1 or KSR2 dimerization with BRAF leading to BRAF activation and phosphorylation of MAP2K1. MAP2K1/MEK1 is also the target of negative feed-back regulation by its substrate kinases, such as MAPK1/ERK2. These phosphorylate MAP2K1/MEK1 on Thr-292, thereby facilitating dephosphorylation of the activating residues Ser-218 and Ser-222. Inhibited by serine/threonine phosphatase 2A. Dual specificity protein kinase which acts as an essential component of the MAP kinase signal transduction pathway. Binding of extracellular ligands such as growth factors, cytokines and hormones to their cell-surface receptors activates RAS and this initiates RAF1 activation. RAF1 then further activates the dual-specificity protein kinases MAP2K1/MEK1 and MAP2K2/MEK2. Both MAP2K1/MEK1 and MAP2K2/MEK2 function specifically in the MAPK/ERK cascade, and catalyze the concomitant phosphorylation of a threonine and a tyrosine residue in a Thr-Glu-Tyr sequence located in the extracellular signal-regulated kinases MAPK3/ERK1 and MAPK1/ERK2, leading to their activation and further transduction of the signal within the MAPK/ERK cascade. Activates BRAF in a KSR1 or KSR2-dependent manner; by binding to KSR1 or KSR2 releases the inhibitory intramolecular interaction between KSR1 or KSR2 protein kinase and N-terminal domains which promotes KSR1 or KSR2-BRAF dimerization and BRAF activation. Depending on the cellular context, this pathway mediates diverse biological functions such as cell growth, adhesion, survival and differentiation, predominantly through the regulation of transcription, metabolism and cytoskeletal rearrangements. One target of the MAPK/ERK cascade is peroxisome proliferator-activated receptor gamma (PPARG), a nuclear receptor that promotes differentiation and apoptosis. MAP2K1/MEK1 has been shown to export PPARG from the nucleus. The MAPK/ERK cascade is also involved in the regulation of endosomal dynamics, including lysosome processing and endosome cycling through the perinuclear recycling compartment (PNRC), as well as in the fragmentation of the Golgi apparatus during mitosis. The polypeptide is Dual specificity mitogen-activated protein kinase kinase 1 (Map2k1) (Mus musculus (Mouse)).